Here is a 462-residue protein sequence, read N- to C-terminus: G-patch domain and KOW motifs-containing protein homolog 1 (462 aa).

2 disordered regions span residues 1–26 and 182–218; these read MVEQ…KREE and LKLP…EEEK. Positions 154-202 constitute a G-patch domain; that stretch reads IESFGLAILRGCNWKDGDGIGKNPQKVALKLPNRRPPGLGLGATPKNPV. Residues 221–248 enclose the KOW 1 domain; sequence EIKVGSFIKVVDGRNKGVYGKVEGRDDD. Positions 289–305 are enriched in basic and acidic residues; sequence EYDKEKDRLETERKKLE. Residues 289–337 form a disordered region; it reads EYDKEKDRLETERKKLESQPPSTSTSQSSKDYKSKSSSSKHDKNSSEYE. Residues 306–317 show a composition bias toward low complexity; the sequence is SQPPSTSTSQSS. The span at 318–337 shows a compositional bias: basic and acidic residues; that stretch reads KDYKSKSSSSKHDKNSSEYE. Positions 401–428 constitute a KOW 2 domain; it reads PREIGEKLMIVAGKRSGQLAVMLDKDKR.

This sequence belongs to the MOS2 family.

The protein localises to the nucleus. The protein is G-patch domain and KOW motifs-containing protein homolog 1 of Caenorhabditis elegans.